The following is a 506-amino-acid chain: Histidine ammonia-lyase (506 aa).

Residues 143–145 (ASG) constitute a cross-link (5-imidazolinone (Ala-Gly)). Residue serine 144 is modified to 2,3-didehydroalanine (Ser).

This sequence belongs to the PAL/histidase family. In terms of processing, contains an active site 4-methylidene-imidazol-5-one (MIO), which is formed autocatalytically by cyclization and dehydration of residues Ala-Ser-Gly.

It localises to the cytoplasm. The catalysed reaction is L-histidine = trans-urocanate + NH4(+). The protein operates within amino-acid degradation; L-histidine degradation into L-glutamate; N-formimidoyl-L-glutamate from L-histidine: step 1/3. This is Histidine ammonia-lyase from Enterobacter sp. (strain 638).